Here is a 269-residue protein sequence, read N- to C-terminus: 3-methyl-2-oxobutanoate hydroxymethyltransferase (269 aa).

Mg(2+) contacts are provided by Asp43 and Asp82. 3-methyl-2-oxobutanoate is bound by residues Asp43–Ser44, Asp82, and Lys110. Residue Glu112 coordinates Mg(2+). Glu179 (proton acceptor) is an active-site residue.

It belongs to the PanB family. As to quaternary structure, homodecamer; pentamer of dimers. Mg(2+) is required as a cofactor.

The protein localises to the cytoplasm. The enzyme catalyses 3-methyl-2-oxobutanoate + (6R)-5,10-methylene-5,6,7,8-tetrahydrofolate + H2O = 2-dehydropantoate + (6S)-5,6,7,8-tetrahydrofolate. Its pathway is cofactor biosynthesis; (R)-pantothenate biosynthesis; (R)-pantoate from 3-methyl-2-oxobutanoate: step 1/2. Its function is as follows. Catalyzes the reversible reaction in which hydroxymethyl group from 5,10-methylenetetrahydrofolate is transferred onto alpha-ketoisovalerate to form ketopantoate. In Acinetobacter baumannii (strain AB307-0294), this protein is 3-methyl-2-oxobutanoate hydroxymethyltransferase.